A 94-amino-acid chain; its full sequence is Large ribosomal subunit protein bL25 (94 aa).

The protein belongs to the bacterial ribosomal protein bL25 family. As to quaternary structure, part of the 50S ribosomal subunit; part of the 5S rRNA/L5/L18/L25 subcomplex. Contacts the 5S rRNA. Binds to the 5S rRNA independently of L5 and L18.

In terms of biological role, this is one of the proteins that binds to the 5S RNA in the ribosome where it forms part of the central protuberance. The polypeptide is Large ribosomal subunit protein bL25 (Proteus mirabilis (strain HI4320)).